A 92-amino-acid polypeptide reads, in one-letter code: Cell division protein FtsB (92 aa).

Residues 1–3 (MKW) lie on the Cytoplasmic side of the membrane. The helical transmembrane segment at 4 to 21 (VTVVLSFALVCCQYSLWF) threads the bilayer. The Periplasmic segment spans residues 22–92 (GKGSIGRNSS…TFYRLIRHNR (71 aa)). Residues 28–50 (RNSSLREQIAVQEEKNQTLALRN) are a coiled coil.

Belongs to the FtsB family. As to quaternary structure, part of a complex composed of FtsB, FtsL and FtsQ.

Its subcellular location is the cell inner membrane. Functionally, essential cell division protein. May link together the upstream cell division proteins, which are predominantly cytoplasmic, with the downstream cell division proteins, which are predominantly periplasmic. This Neisseria meningitidis serogroup C (strain 053442) protein is Cell division protein FtsB.